The chain runs to 415 residues: Phosphoglycerate kinase (415 aa).

Residues 24–26 (DLN), arginine 39, 62–65 (HLGR), arginine 121, and arginine 161 each bind substrate. ATP is bound by residues lysine 211, glycine 307, glutamate 338, and 367–370 (GGDS).

It belongs to the phosphoglycerate kinase family. As to quaternary structure, monomer.

Its subcellular location is the cytoplasm. It carries out the reaction (2R)-3-phosphoglycerate + ATP = (2R)-3-phospho-glyceroyl phosphate + ADP. It functions in the pathway carbohydrate degradation; glycolysis; pyruvate from D-glyceraldehyde 3-phosphate: step 2/5. The protein is Phosphoglycerate kinase of Micrococcus luteus (strain ATCC 4698 / DSM 20030 / JCM 1464 / CCM 169 / CCUG 5858 / IAM 1056 / NBRC 3333 / NCIMB 9278 / NCTC 2665 / VKM Ac-2230) (Micrococcus lysodeikticus).